The following is a 183-amino-acid chain: Myelin-associated oligodendrocyte basic protein (183 aa).

A disordered region spans residues 68 to 183 (TRTSRRAKSP…GSPVKASRFW (116 aa)). A compositionally biased stretch (basic residues) spans 69–78 (RTSRRAKSPQ). The span at 79–96 (RPKQQPAAPPAVVRAPAK) shows a compositional bias: low complexity. Tandem repeats lie at residues 97-106 (PRSPPRSERQ), 107-116 (PRSPPRSERQ), 117-126 (PRSPPRSERQ), and 127-136 (PRSPPRSERQ). A 4 X 10 AA tandem repeats of P-R-S-P-P-R-S-E-R-Q region spans residues 97-136 (PRSPPRSERQPRSPPRSERQPRSPPRSERQPRSPPRSERQ). Residues Ser-99 and Ser-109 each carry the phosphoserine modification. Residues 101 to 143 (PRSERQPRSPPRSERQPRSPPRSERQPRSPPRSERQPRPRPEV) are compositionally biased toward basic and acidic residues. Residues 151–164 (RPPQKSKQQPRSSP) show a composition bias toward low complexity.

Its subcellular location is the cytoplasm. The protein resides in the perinuclear region. Its function is as follows. May play a role in compacting or stabilizing the myelin sheath, possibly by binding the negatively charged acidic phospholipids of the cytoplasmic membrane. This Homo sapiens (Human) protein is Myelin-associated oligodendrocyte basic protein (MOBP).